Reading from the N-terminus, the 583-residue chain is Vivapain-1 (583 aa).

Residues Met-1 to Lys-34 lie on the Cytoplasmic side of the membrane. Positions Met-1–Asp-338 are cleaved as a propeptide — activation peptide. The chain crosses the membrane as a helical; Signal-anchor for type II membrane protein span at residues Ile-35–Ala-55. Residues Met-56–Leu-583 lie on the Lumenal side of the membrane. The segment covering Ser-62 to Pro-82 has biased composition (polar residues). Disordered stretches follow at residues Ser-62–Gly-83 and Pro-104–Asn-125. A glycan (N-linked (GlcNAc...) asparagine) is linked at Asn-70. Basic and acidic residues predominate over residues Gly-106–Ala-119. Residues Asn-195 and Asn-272 are each glycosylated (N-linked (GlcNAc...) asparagine). 3 cysteine pairs are disulfide-bonded: Cys-360-Cys-402, Cys-395-Cys-435, and Cys-420-Cys-440. Cys-363 is a catalytic residue. Asn-381 is a glycosylation site (N-linked (GlcNAc...) asparagine). Residues Asn-486 and Asn-494 are each glycosylated (N-linked (GlcNAc...) asparagine). Cysteines 489 and 572 form a disulfide. Active-site residues include His-495 and Asn-547.

The protein belongs to the peptidase C1 family.

It is found in the membrane. Its function is as follows. Cysteine protease. The protein is Vivapain-1 of Plasmodium vivax (strain Salvador I).